The primary structure comprises 305 residues: Acyl transferase (305 aa).

Active-site charge relay system residues include serine 116, aspartate 213, and histidine 243.

It belongs to the LuxD family.

The protein operates within lipid metabolism; fatty acid reduction for biolumincescence. In terms of biological role, acyl transferase is part of the fatty acid reductase system required for aldehyde biosynthesis; it produces fatty acids for the luminescent reaction. This Shewanella woodyi (strain ATCC 51908 / MS32) protein is Acyl transferase.